Consider the following 215-residue polypeptide: Nucleoside triphosphate pyrophosphatase (215 aa).

Catalysis depends on Asp80, which acts as the Proton acceptor.

It belongs to the Maf family. It depends on a divalent metal cation as a cofactor.

It localises to the cytoplasm. It carries out the reaction a ribonucleoside 5'-triphosphate + H2O = a ribonucleoside 5'-phosphate + diphosphate + H(+). It catalyses the reaction a 2'-deoxyribonucleoside 5'-triphosphate + H2O = a 2'-deoxyribonucleoside 5'-phosphate + diphosphate + H(+). In terms of biological role, nucleoside triphosphate pyrophosphatase. May have a dual role in cell division arrest and in preventing the incorporation of modified nucleotides into cellular nucleic acids. This is Nucleoside triphosphate pyrophosphatase from Leifsonia xyli subsp. xyli (strain CTCB07).